Consider the following 102-residue polypeptide: UV-induced protein uvi31 (102 aa).

This sequence belongs to the BolA/IbaG family.

It localises to the mitochondrion matrix. It is found in the cytoplasm. The protein resides in the nucleus. Its function is as follows. Acts as a mitochondrial iron-sulfur (Fe-S) cluster assembly factor that facilitates [4Fe-4S] cluster insertion into a subset of mitochondrial proteins such as lipoyl synthase (LS) and succinate dehydrogenase (SDH). Required during the last step of iron-sulfur protein assembly when the iron-sulfur cluster is inserted into the target protein. Probably acts together with the monothiol glutaredoxin grx5. Not required for [2Fe-2S] cluster insertion into mitochondrial proteins. May be involved in control of cell division, especially during the resumption from cell cycle arrest. This chain is UV-induced protein uvi31, found in Schizosaccharomyces pombe (strain 972 / ATCC 24843) (Fission yeast).